We begin with the raw amino-acid sequence, 969 residues long: MPPRAPPAPGPRPPPRAAAATDTAAGAGGAGGAGGAGGPGFRPLAPRPWRWLLLLALPAACSAPPPRPVYTNHWAVQVLGGPAEADRVAAAHGYLNLGQIGNLEDYYHFYHSKTFKRSTLSSRGPHTFLRMDPQVKWLQQQEVKRRVKRQVRSDPQALYFNDPIWSNMWYLHCGDKNSRCRSEMNVQAAWKRGYTGKNVVVTILDDGIERNHPDLAPNYDSYASYDVNGNDYDPSPRYDASNENKHGTRCAGEVAASANNSYCIVGIAYNAKIGGIRMLDGDVTDVVEAKSLGIRPNYIDIYSASWGPDDDGKTVDGPGRLAKQAFEYGIKKGRQGLGSIFVWASGNGGREGDYCSCDGYTNSIYTISVSSATENGYKPWYLEECASTLATTYSSGAFYERKIVTTDLRQRCTDGHTGTSVSAPMVAGIIALALEANSQLTWRDVQHLLVKTSRPAHLKASDWKVNGAGHKVSHFYGFGLVDAEALVVEAKKWTAVPSQHMCVAASDKRPRSIPLVQVLRTTALTSACAEHSDQRVVYLEHVVVRTSISHPRRGDLQIYLVSPSGTKSQLLAKRLLDLSNEGFTNWEFMTVHCWGEKAEGQWTLEIQDLPSQVRNPEKQGKLKEWSLILYGTAEHPYHTFSAHQSRSRMLELSAPELEPPKAALSPSQVEVPEDEEDYTAQSTPGSANILQTSVCHPECGDKGCDGPNADQCLNCVHFSLGSVKTSRKCVSVCPLGYFGDTAARRCRRCHKGCETCSSRAATQCLSCRRGFYHHQEMNTCVTLCPAGFYADESQKNCLKCHPSCKKCVDEPEKCTVCKEGFSLARGSCIPDCEPGTYFDSELIRCGECHHTCGTCVGPGREECIHCAKNFHFHDWKCVPACGEGFYPEEMPGLPHKVCRRCDENCLSCAGSSRNCSRCKTGFTQLGTSCITNHTCSNADETFCEMVKSNRLCERKLFIQFCCRTCLLAG.

Residues 1 to 16 (MPPRAPPAPGPRPPPR) are compositionally biased toward pro residues. The interval 1-39 (MPPRAPPAPGPRPPPRAAAATDTAAGAGGAGGAGGAGGP) is disordered. The N-terminal stretch at 1-63 (MPPRAPPAPG…LLALPAACSA (63 aa)) is a signal peptide. A compositionally biased stretch (gly residues) spans 26 to 39 (GAGGAGGAGGAGGP). Positions 64–149 (PPPRPVYTNH…QQEVKRRVKR (86 aa)) are excised as a propeptide. One can recognise a Peptidase S8 domain in the interval 168–487 (MWYLHCGDKN…FGLVDAEALV (320 aa)). Residues Asp205 and His246 each act as charge relay system in the active site. A glycan (N-linked (GlcNAc...) asparagine) is linked at Asn259. Ser420 serves as the catalytic Charge relay system. The region spanning 495–635 (AVPSQHMCVA…SLILYGTAEH (141 aa)) is the P/Homo B domain. The Cell attachment site motif lies at 553-555 (RGD). The disordered stretch occupies residues 658–683 (EPPKAALSPSQVEVPEDEEDYTAQST). FU repeat units follow at residues 692-739 (TSVC…GYFG), 743-790 (ARRC…GFYA), 794-838 (QKNC…GTYF), 842-887 (LIRC…GFYP), and 895-943 (HKVC…ETFC). Positions 695-930 (CHPECGDKGC…GFTQLGTSCI (236 aa)) are CRM (Cys-rich motif). N-linked (GlcNAc...) asparagine glycosylation is found at Asn914 and Asn932. One can recognise a PLAC domain in the interval 931 to 969 (TNHTCSNADETFCEMVKSNRLCERKLFIQFCCRTCLLAG).

It belongs to the peptidase S8 family. In terms of assembly, the PACE4A-I precursor protein seems to exist in the reticulum endoplasmic as both a monomer and a dimer-sized complex whereas mature PACE4A-I exists only as a monomer, suggesting that propeptide cleavage affects its tertiary or quaternary structure. Interacts (immature form including the propeptide) with RCN3; probably involved in the maturation and the secretion of PCSK6. Ca(2+) is required as a cofactor. In terms of tissue distribution, each PACE4 isoform exhibits a unique restricted distribution. Isoform PACE4A-I is expressed in heart, brain, placenta, lung, skeletal muscle, kidney, pancreas, but at comparatively higher levels in the liver. Isoform PACE4A-II is at least expressed in placenta. Isoform PACE4B was only found in the embryonic kidney cell line from which it was isolated. Isoform PACE4C and isoform PACE4D are expressed in placenta. Isoform PACE4E-I is expressed in cerebellum, placenta and pituitary. Isoform PACE4E-II is at least present in cerebellum.

It localises to the secreted. The protein localises to the endoplasmic reticulum. Its subcellular location is the endomembrane system. Functionally, serine endoprotease that processes various proproteins by cleavage at paired basic amino acids, recognizing the RXXX[KR]R consensus motif. Likely functions in the constitutive secretory pathway, with unique restricted distribution in both neuroendocrine and non-neuroendocrine tissues. The chain is Proprotein convertase subtilisin/kexin type 6 (PCSK6) from Homo sapiens (Human).